The primary structure comprises 869 residues: Phenylalanine--tRNA ligase beta subunit (869 aa).

The 122-residue stretch at 41–162 (SQVTGPIVVG…QYGFSEAEYE (122 aa)) folds into the tRNA-binding domain. Positions 443 to 519 (PRAKAIHFKA…RLVGYDQIPI (77 aa)) constitute a B5 domain. Positions 497, 503, 506, and 507 each coordinate Mg(2+). In terms of domain architecture, FDX-ACB spans 776–868 (STFPPVKQDL…EAAEIGAQLR (93 aa)).

It belongs to the phenylalanyl-tRNA synthetase beta subunit family. Type 1 subfamily. As to quaternary structure, tetramer of two alpha and two beta subunits. Mg(2+) serves as cofactor.

It localises to the cytoplasm. It carries out the reaction tRNA(Phe) + L-phenylalanine + ATP = L-phenylalanyl-tRNA(Phe) + AMP + diphosphate + H(+). The sequence is that of Phenylalanine--tRNA ligase beta subunit from Bifidobacterium longum (strain NCC 2705).